Reading from the N-terminus, the 197-residue chain is uncharacterized protein (197 aa).

Positions 33-184 (MISKIMDASS…IAEFMSILGK (152 aa)) constitute an SIS domain.

This sequence belongs to the SIS family. PHI subfamily.

This is an uncharacterized protein from Methanothermobacter thermautotrophicus (strain ATCC 29096 / DSM 1053 / JCM 10044 / NBRC 100330 / Delta H) (Methanobacterium thermoautotrophicum).